We begin with the raw amino-acid sequence, 730 residues long: Sodium-dependent neutral amino acid transporter B(0)AT2 (730 aa).

Positions 1–24 (MPKNSKVVKRELDDDVTESVKDLL) are disordered. Over 1-70 (MPKNSKVVKR…RPAWSSKLQY (70 aa)) the chain is Extracellular. Phosphoserine is present on residues serine 25 and serine 55. A run of 3 helical transmembrane segments spans residues 71–91 (ILAQ…PYLC), 97–117 (GAYL…LFFL), and 149–169 (VVCY…LFYF). Residues 170 to 223 (SQSFQQPLPWDQCPLVKNASHTFVEPECEQSSATTYYWYREALNISSSISESGG) are Cytoplasmic-facing. The next 2 helical transmembrane spans lie at 224-244 (LNWK…LAMI) and 253-273 (IIYF…IRAL). N-linked (GlcNAc...) asparagine glycosylation is present at asparagine 276. A run of 2 helical transmembrane segments spans residues 302-322 (AATQ…AFSS) and 335-355 (VLVS…VFAV). The Cytoplasmic segment spans residues 356-458 (LGFKANVINE…AMTHFPASPF (103 aa)). Helical transmembrane passes span 459–479 (WSVM…FGTI), 494–514 (KEIL…IFVQ), 530–550 (TLPL…VYGI), 575–595 (YVSP…MGLS), and 619–639 (LVVC…VFIV). Residues 640–730 (RRFNLIDDSS…IMPDMPESDL (91 aa)) lie on the Extracellular side of the membrane. Phosphoserine is present on residues serine 687, serine 699, and serine 701.

It belongs to the sodium:neurotransmitter symporter (SNF) (TC 2.A.22) family. SLC6A15 subfamily.

It is found in the membrane. It catalyses the reaction L-leucine(in) + Na(+)(in) = L-leucine(out) + Na(+)(out). The catalysed reaction is L-isoleucine(in) + Na(+)(in) = L-isoleucine(out) + Na(+)(out). It carries out the reaction L-methionine(in) + Na(+)(in) = L-methionine(out) + Na(+)(out). The enzyme catalyses L-proline(in) + Na(+)(in) = L-proline(out) + Na(+)(out). It catalyses the reaction L-alanine(in) + Na(+)(in) = L-alanine(out) + Na(+)(out). The catalysed reaction is L-asparagine(in) + Na(+)(in) = L-asparagine(out) + Na(+)(out). It carries out the reaction L-valine(in) + Na(+)(in) = L-valine(out) + Na(+)(out). The enzyme catalyses L-cysteine(in) + Na(+)(in) = L-cysteine(out) + Na(+)(out). It catalyses the reaction L-glutamine(in) + Na(+)(in) = L-glutamine(out) + Na(+)(out). The catalysed reaction is L-serine(in) + Na(+)(in) = L-serine(out) + Na(+)(out). It carries out the reaction L-threonine(in) + Na(+)(in) = L-threonine(out) + Na(+)(out). The enzyme catalyses L-pipecolate(in) + Na(+)(in) = L-pipecolate(out) + Na(+)(out). It catalyses the reaction L-phenylalanine(in) + Na(+)(in) = L-phenylalanine(out) + Na(+)(out). Functions as a sodium-dependent neutral amino acid transporter. Exhibits preference for the branched-chain amino acids, particularly leucine, valine and isoleucine and methionine. Can also transport low-affinity substrates such as alanine, phenylalanine, glutamine and pipecolic acid. Mediates the saturable, pH-sensitive and electrogenic cotransport of proline and sodium ions with a stoichiometry of 1:1. May have a role as transporter for neurotransmitter precursors into neurons. In contrast to other members of the neurotransmitter transporter family, does not appear to be chloride-dependent. This is Sodium-dependent neutral amino acid transporter B(0)AT2 (SLC6A15) from Pongo abelii (Sumatran orangutan).